The chain runs to 386 residues: Flap endonuclease 1 (386 aa).

An N-domain region spans residues 1-104 (MGILGLSKLI…GELAKRAERR (104 aa)). D34 lines the Mg(2+) pocket. The DNA site is built by R47 and R70. D86, E158, E160, D179, and D181 together coordinate Mg(2+). The tract at residues 122–253 (EIEKFNRRLV…KRAIELINNY (132 aa)) is I-domain. Residue E158 participates in DNA binding. G231 and D233 together coordinate DNA. D233 is a binding site for Mg(2+). The interaction with PCNA stretch occupies residues 336-344 (TQVRLDSFF). Positions 354–386 (VNAAKRKAEEAKKSANNKKAKTSGGAARGRRPK) are disordered.

Belongs to the XPG/RAD2 endonuclease family. FEN1 subfamily. Interacts with PCNA. Three molecules of FEN1 bind to one PCNA trimer with each molecule binding to one PCNA monomer. PCNA stimulates the nuclease activity without altering cleavage specificity. Requires Mg(2+) as cofactor. In terms of processing, phosphorylated. Phosphorylation upon DNA damage induces relocalization to the nuclear plasma.

Its subcellular location is the nucleus. It localises to the nucleolus. The protein resides in the nucleoplasm. It is found in the mitochondrion. Its function is as follows. Structure-specific nuclease with 5'-flap endonuclease and 5'-3' exonuclease activities involved in DNA replication and repair. During DNA replication, cleaves the 5'-overhanging flap structure that is generated by displacement synthesis when DNA polymerase encounters the 5'-end of a downstream Okazaki fragment. It enters the flap from the 5'-end and then tracks to cleave the flap base, leaving a nick for ligation. Also involved in the long patch base excision repair (LP-BER) pathway, by cleaving within the apurinic/apyrimidinic (AP) site-terminated flap. Acts as a genome stabilization factor that prevents flaps from equilibrating into structures that lead to duplications and deletions. Also possesses 5'-3' exonuclease activity on nicked or gapped double-stranded DNA, and exhibits RNase H activity. Also involved in replication and repair of rDNA and in repairing mitochondrial DNA. The sequence is that of Flap endonuclease 1 from Drosophila pseudoobscura pseudoobscura (Fruit fly).